Here is a 785-residue protein sequence, read N- to C-terminus: Protein SEY1 (785 aa).

At 1–690 the chain is on the cytoplasmic side; it reads MTDLEVSAIQ…KRSVINSKTE (690 aa). Positions 40-266 constitute a GB1/RHD3-type G domain; the sequence is GLNYHIVSVF…SEDQLFNEGY (227 aa). 50–57 contributes to the GTP binding site; that stretch reads GSQSTGKS. Residues 451 to 479 adopt a coiled-coil conformation; that stretch reads PKLRELEEELSNLRTELVNKEQENIKTKI. Residues 691–711 form a helical membrane-spanning segment; it reads VPLYIYALLLVLGWNEFMIIL. Residues 712–714 lie on the Lumenal side of the membrane; the sequence is RNP. The chain crosses the membrane as a helical span at residues 715 to 735; the sequence is LLITLLLIGLTGLYLGYKTKL. Residues 736-785 are Cytoplasmic-facing; the sequence is LGPIVQVVQAMIQELQDQAKNKLRDVLVSEPEAPSQVRIGKEVDATKDED.

This sequence belongs to the TRAFAC class dynamin-like GTPase superfamily. GB1/RHD3 GTPase family. RHD3 subfamily.

Its subcellular location is the endoplasmic reticulum membrane. Its function is as follows. Cooperates with the reticulon proteins and tubule-shaping DP1 family proteins to generate and maintain the structure of the tubular endoplasmic reticulum network. Has GTPase activity, which is required for its function in ER organization. The protein is Protein SEY1 of Komagataella phaffii (strain GS115 / ATCC 20864) (Yeast).